The following is a 250-amino-acid chain: UPF0494 membrane protein PB2B2.07c (250 aa).

3 consecutive transmembrane segments (helical) span residues 98–118, 144–164, and 179–199; these read WPLL…NFEV, IAIY…MFPL, and MIIA…GATI.

It belongs to the UPF0494 family.

The protein resides in the cytoplasm. Its subcellular location is the endoplasmic reticulum. The protein localises to the golgi apparatus. It localises to the membrane. The protein is UPF0494 membrane protein PB2B2.07c of Schizosaccharomyces pombe (strain 972 / ATCC 24843) (Fission yeast).